Here is an 807-residue protein sequence, read N- to C-terminus: Ribosomal RNA large subunit methyltransferase K/L (807 aa).

The THUMP domain maps to 67–182 (QIYKICLWSR…EKQAEIFLDL (116 aa)). The span at 548 to 560 (NTQYGNPEASAQS) shows a compositional bias: polar residues. The disordered stretch occupies residues 548-602 (NTQYGNPEASAQSKESKNAPEPKKDNRNRYKGNKFQQAREEAKRQEAQRLAQKKR). 2 stretches are compositionally biased toward basic and acidic residues: residues 561–575 (KESK…DNRN) and 584–594 (QAREEAKRQEA).

Belongs to the methyltransferase superfamily. RlmKL family.

The protein localises to the cytoplasm. It catalyses the reaction guanosine(2445) in 23S rRNA + S-adenosyl-L-methionine = N(2)-methylguanosine(2445) in 23S rRNA + S-adenosyl-L-homocysteine + H(+). It carries out the reaction guanosine(2069) in 23S rRNA + S-adenosyl-L-methionine = N(2)-methylguanosine(2069) in 23S rRNA + S-adenosyl-L-homocysteine + H(+). Specifically methylates the guanine in position 2445 (m2G2445) and the guanine in position 2069 (m7G2069) of 23S rRNA. This chain is Ribosomal RNA large subunit methyltransferase K/L, found in Psychrobacter sp. (strain PRwf-1).